A 546-amino-acid polypeptide reads, in one-letter code: Chaperonin GroEL (546 aa).

ATP contacts are provided by residues 30 to 33 (TLGP), Lys51, 87 to 91 (DGTTT), Gly415, 479 to 481 (NAA), and Asp495. Positions 526-546 (KEEKPDLSGAGAGMGGMGGMM) are disordered. The span at 535–546 (AGAGMGGMGGMM) shows a compositional bias: gly residues.

The protein belongs to the chaperonin (HSP60) family. In terms of assembly, forms a cylinder of 14 subunits composed of two heptameric rings stacked back-to-back. Interacts with the co-chaperonin GroES.

Its subcellular location is the cytoplasm. It catalyses the reaction ATP + H2O + a folded polypeptide = ADP + phosphate + an unfolded polypeptide.. Functionally, together with its co-chaperonin GroES, plays an essential role in assisting protein folding. The GroEL-GroES system forms a nano-cage that allows encapsulation of the non-native substrate proteins and provides a physical environment optimized to promote and accelerate protein folding. The polypeptide is Chaperonin GroEL (Wigglesworthia glossinidia brevipalpis).